The following is a 207-amino-acid chain: Large ribosomal subunit protein uL4 (207 aa).

Residues 49–73 (AKKRGEVSGGGKKPWKQKGGGRARA) are disordered.

Belongs to the universal ribosomal protein uL4 family. As to quaternary structure, part of the 50S ribosomal subunit.

In terms of biological role, one of the primary rRNA binding proteins, this protein initially binds near the 5'-end of the 23S rRNA. It is important during the early stages of 50S assembly. It makes multiple contacts with different domains of the 23S rRNA in the assembled 50S subunit and ribosome. Forms part of the polypeptide exit tunnel. This chain is Large ribosomal subunit protein uL4, found in Helicobacter hepaticus (strain ATCC 51449 / 3B1).